The chain runs to 1420 residues: Protein CFT1 (1420 aa).

The span at 161 to 182 shows a compositional bias: acidic residues; sequence DEDEEEEEEEDEEDEDEGEENI. Disordered stretches follow at residues 161–210, 435–488, and 722–760; these read DEDE…TTNQ, QVRY…QKTI, and NTSSNKRKRKHSALSNSEGSKKNTGKSQPSTAAPPPPPK. Composition is skewed to basic and acidic residues over residues 183 to 204 and 437 to 461; these read DDTKEKKDKKQSKTDTIEEDKN and RYRDSSKTSDTKESKLNKIEEKEDN. Over residues 462–483 the composition is skewed to acidic residues; it reads KDDDDNDDDDEDDLYKEEEEEE.

It belongs to the CFT1 family.

The protein resides in the nucleus. Its function is as follows. RNA-binding component of the cleavage and polyadenylation factor (CPF) complex, which plays a key role in polyadenylation-dependent pre-mRNA 3'-end formation and cooperates with cleavage factors including the CFIA complex and NAB4/CFIB. Involved in poly(A) site recognition. May be involved in coupling transcription termination and mRNA 3'-end formation. The chain is Protein CFT1 (CFT1) from Candida albicans (strain SC5314 / ATCC MYA-2876) (Yeast).